A 770-amino-acid chain; its full sequence is MKMTVDFEECLKDSPRFRAALEEVEGDVAELELKLDKLVKLCIAMIDTGKAFCAANKQFMNGIRDLAQYSSNDAVVETSLTKFSDSLQEMINFHTILFDQTQRSIKAQLQNFVKEDLRKFKDAKKQFEKVSEEKENALVKNAQVQRNKQHEVEEAANILTATRKCFRHIALDYVLQINVLQSKRRSEILKSMLSFMYAHLAFFHQGYDLFSELGPYMKDLGAQLDRLVVDAAKEKREMEQKHSTIQQKDFSSDDSKLEYNVDAANGIVMEGYLFKRASNAFKTWNRRWFSIQNNQLVYQKKFKDSPTVVVEDLRLCTVKHCEDIERRFCFEVVSPTKSCMLQADSEKLRQAWIKAVQTSIATAYREKGDESEKLDKKSSPSTGSLDSGSESKEKLLKGESALQRVQCIPGNTSCCDCGLADPRWASINLGITLCIECSGIHRSLGVHFSKVRSLTLDTWEPELLKLMCELGNDVINRVYEAKLEKMGVKKPQPGQRQEKEAYIRAKYVERKFVDKYSTLLSPSEQEKRIISKSCEDQRLSHTRVSVHTPVKSNDSGIQQCSDDGRESLPSTVSANSLYEPEGERQESSVFLDSKHLNPGLQLYRASYEKNLPKMAEALAHGADVNWANSDENQATPLIQAVLGGSLVTCEFLLQNGANVNQRDVQGRGPLHHATVLGHTGQVCLFLKRGANQHATDEEGKDPLSIAVEAANADIVTLLRLARMNEEMRESEGLYGQPGDETYQDIFRDFSQMASNNPEKLNRFQQDSQKF.

Residues 6 to 226 (DFEECLKDSP…MKDLGAQLDR (221 aa)) enclose the BAR domain. One can recognise a PH domain in the interval 266 to 361 (GIVMEGYLFK…WIKAVQTSIA (96 aa)). Residues 371 to 392 (SEKLDKKSSPSTGSLDSGSESK) form a disordered region. Low complexity predominate over residues 379 to 388 (SPSTGSLDSG). Phosphoserine occurs at positions 384 and 387. Positions 399 to 520 (ESALQRVQCI…KFVDKYSTLL (122 aa)) constitute an Arf-GAP domain. The C4-type zinc-finger motif lies at 414–437 (CCDCGLADPRWASINLGITLCIEC). Position 521 is a phosphoserine (S521). Residues 548 to 561 (TPVKSNDSGIQQCS) are compositionally biased toward polar residues. The segment at 548-571 (TPVKSNDSGIQQCSDDGRESLPST) is disordered. A phosphoserine mark is found at S573 and S576. ANK repeat units lie at residues 632 to 661 (NQAT…NVNQ), 665 to 694 (QGRG…NQHA), and 698 to 727 (EGKD…NEEM). Y734 is subject to Phosphotyrosine. S767 bears the Phosphoserine mark.

As to quaternary structure, interacts with RAB35 (GTP-bound form); the interaction is direct and probably recruits ACAP2 to membranes. Interacts with MICALL1; the interaction is indirect through RAB35.

It is found in the endosome membrane. The protein localises to the cell membrane. With respect to regulation, GAP activity stimulated by phosphatidylinositol 4,5-bisphosphate (PIP2) and phosphatidic acid. Its function is as follows. GTPase-activating protein (GAP) for ADP ribosylation factor 6 (ARF6). Doesn't show GAP activity for RAB35. The protein is Arf-GAP with coiled-coil, ANK repeat and PH domain-containing protein 2 (Acap2) of Rattus norvegicus (Rat).